The following is a 105-amino-acid chain: UPF0060 membrane protein Reut_B3679 (105 aa).

4 consecutive transmembrane segments (helical) span residues isoleucine 4–tryptophan 24, glycine 28–leucine 48, alanine 60–valine 80, and proline 82–phenylalanine 102.

Belongs to the UPF0060 family.

It is found in the cell inner membrane. The chain is UPF0060 membrane protein Reut_B3679 from Cupriavidus pinatubonensis (strain JMP 134 / LMG 1197) (Cupriavidus necator (strain JMP 134)).